Consider the following 124-residue polypeptide: Small ribosomal subunit protein uS12 (124 aa).

Aspartate 89 is subject to 3-methylthioaspartic acid. Residues 105–124 (QGVKNRKQARSRYGAKKEKS) form a disordered region. Basic residues predominate over residues 108 to 118 (KNRKQARSRYG).

This sequence belongs to the universal ribosomal protein uS12 family. As to quaternary structure, part of the 30S ribosomal subunit. Contacts proteins S8 and S17. May interact with IF1 in the 30S initiation complex.

Its function is as follows. With S4 and S5 plays an important role in translational accuracy. In terms of biological role, interacts with and stabilizes bases of the 16S rRNA that are involved in tRNA selection in the A site and with the mRNA backbone. Located at the interface of the 30S and 50S subunits, it traverses the body of the 30S subunit contacting proteins on the other side and probably holding the rRNA structure together. The combined cluster of proteins S8, S12 and S17 appears to hold together the shoulder and platform of the 30S subunit. This chain is Small ribosomal subunit protein uS12, found in Mycobacterium leprae (strain Br4923).